Reading from the N-terminus, the 306-residue chain is Glutathione transport system permease protein GsiC (306 aa).

Residues 1-8 (MLNYFIKR) lie on the Cytoplasmic side of the membrane. Residues 9 to 29 (LLGLIPTLLIVMVLVFLFVHL) form a helical membrane-spanning segment. Residues 30–98 (LPGDPARLAA…QEIALRFMPT (69 aa)) are Periplasmic-facing. Residues 95-292 (FMPTFWLTVC…LEFILINLLV (198 aa)) enclose the ABC transmembrane type-1 domain. A helical transmembrane segment spans residues 99–119 (FWLTVCSMAWAVIFGMAIGIV). The Cytoplasmic segment spans residues 120-130 (SAVWRNGWPDR). Residues 131–151 (IGMTLAVSGLSFPAFALGMLL) form a helical membrane-spanning segment. Residues 152–168 (MQIFSVELGWLPTVGAD) are Periplasmic-facing. The helical transmembrane segment at 169–189 (TWLHYILPSLTLGAAVAAVMA) threads the bilayer. The Cytoplasmic portion of the chain corresponds to 190 to 228 (RFTRASFVDVLQEDYMRTARAKGVRESLVVLKHGLRNAL). The helical transmembrane segment at 229-249 (IPVVTMMGLQFGFLLGGSIVV) threads the bilayer. The Periplasmic segment spans residues 250–278 (EKVFNWPGLGRLLVDSVEMRDYPVIQAEV). The chain crosses the membrane as a helical span at residues 279–299 (LLFSLEFILINLLVDMLYAAI). Residues 300–306 (NPAIRYK) are Cytoplasmic-facing.

This sequence belongs to the binding-protein-dependent transport system permease family. As to quaternary structure, the complex is composed of two ATP-binding proteins (GsiA), two transmembrane proteins (GsiC and GsiD) and a solute-binding protein (GsiB).

The protein localises to the cell inner membrane. In terms of biological role, part of the ABC transporter complex GsiABCD involved in glutathione import. Probably responsible for the translocation of the substrate across the membrane. This Pectobacterium atrosepticum (strain SCRI 1043 / ATCC BAA-672) (Erwinia carotovora subsp. atroseptica) protein is Glutathione transport system permease protein GsiC.